The following is a 116-amino-acid chain: Aspartate 1-decarboxylase (116 aa).

Ser-25 (schiff-base intermediate with substrate; via pyruvic acid) is an active-site residue. Ser-25 carries the post-translational modification Pyruvic acid (Ser). Thr-57 serves as a coordination point for substrate. Residue Tyr-58 is the Proton donor of the active site. A substrate-binding site is contributed by 72–74; the sequence is GAA.

This sequence belongs to the PanD family. In terms of assembly, heterooctamer of four alpha and four beta subunits. The cofactor is pyruvate. Is synthesized initially as an inactive proenzyme, which is activated by self-cleavage at a specific serine bond to produce a beta-subunit with a hydroxyl group at its C-terminus and an alpha-subunit with a pyruvoyl group at its N-terminus.

It is found in the cytoplasm. It catalyses the reaction L-aspartate + H(+) = beta-alanine + CO2. It functions in the pathway cofactor biosynthesis; (R)-pantothenate biosynthesis; beta-alanine from L-aspartate: step 1/1. Its function is as follows. Catalyzes the pyruvoyl-dependent decarboxylation of aspartate to produce beta-alanine. This is Aspartate 1-decarboxylase from Helicobacter acinonychis (strain Sheeba).